The sequence spans 406 residues: MSDVNKVVLAYSGGLDTSVILKWLQDTYQCEVVTFTADIGQGEELEPAREKARQFGVKEIYIDDLREEFVRDFVFPMFRANTVYEGEYLLGTSIARPLIAKRLIEIAQETNADAVSHGATGKGNDQVRFELGAYALNPNIKIIAPWREWDLLSREKLLAYAEKHGIPVEMKHRQGGSPYSMDANLLHISYEGRHLENPAAEAEEDMWRWTVSPERAPDEAEYLEIEYRNGDPISLNGKTLKPHELLAELNRLGGKHGIGRLDLVENRYVGMKSRGCYETPGGTILLKAHRAIESITLDREVAHLKDDLMPRYASMIYNGYWWSPERLALQALIDHTQQTVNGWVKLKLYKGNVIVTGRDSGTDSLFDPNIATFEDDAGAYDHRDAGGFIKLNALRLRIAANLRNKK.

Residues Ala-10–Ser-18 and Ala-37 contribute to the ATP site. L-citrulline is bound by residues Tyr-88 and Ser-93. An ATP-binding site is contributed by Gly-118. L-aspartate contacts are provided by Thr-120, Asn-124, and Asp-125. Asn-124 lines the L-citrulline pocket. Residues Arg-128, Ser-180, Ser-189, Glu-265, and Tyr-277 each coordinate L-citrulline.

The protein belongs to the argininosuccinate synthase family. Type 1 subfamily. Homotetramer.

It is found in the cytoplasm. It catalyses the reaction L-citrulline + L-aspartate + ATP = 2-(N(omega)-L-arginino)succinate + AMP + diphosphate + H(+). It functions in the pathway amino-acid biosynthesis; L-arginine biosynthesis; L-arginine from L-ornithine and carbamoyl phosphate: step 2/3. This is Argininosuccinate synthase from Methylobacillus flagellatus (strain ATCC 51484 / DSM 6875 / VKM B-1610 / KT).